The sequence spans 210 residues: dITP/XTP pyrophosphatase (210 aa).

Residue 13–18 (THNPGK) participates in substrate binding. The Mg(2+) site is built by Asp-45 and Asp-74. Asp-74 functions as the Proton acceptor in the catalytic mechanism. Substrate is bound by residues Ser-75, 160 to 163 (FGYD), Lys-183, and 195 to 196 (HR).

It belongs to the HAM1 NTPase family. As to quaternary structure, homodimer. Requires Mg(2+) as cofactor.

It catalyses the reaction XTP + H2O = XMP + diphosphate + H(+). The catalysed reaction is dITP + H2O = dIMP + diphosphate + H(+). The enzyme catalyses ITP + H2O = IMP + diphosphate + H(+). Pyrophosphatase that catalyzes the hydrolysis of nucleoside triphosphates to their monophosphate derivatives, with a high preference for the non-canonical purine nucleotides XTP (xanthosine triphosphate), dITP (deoxyinosine triphosphate) and ITP. Seems to function as a house-cleaning enzyme that removes non-canonical purine nucleotides from the nucleotide pool, thus preventing their incorporation into DNA/RNA and avoiding chromosomal lesions. This is dITP/XTP pyrophosphatase from Rhodopseudomonas palustris (strain ATCC BAA-98 / CGA009).